A 298-amino-acid chain; its full sequence is Acetyl-coenzyme A carboxylase carboxyl transferase subunit beta (298 aa).

In terms of domain architecture, CoA carboxyltransferase N-terminal spans 41 to 298 (PTIECPECHA…RIVSKLMNLP (258 aa)). Zn(2+)-binding residues include Cys-45, Cys-48, Cys-64, and Cys-67. The segment at 45–67 (CPECHALVTRTAIAFNAYVCPSC) adopts a C4-type zinc-finger fold.

The protein belongs to the AccD/PCCB family. In terms of assembly, acetyl-CoA carboxylase is a heterohexamer composed of biotin carboxyl carrier protein (AccB), biotin carboxylase (AccC) and two subunits each of ACCase subunit alpha (AccA) and ACCase subunit beta (AccD). Zn(2+) is required as a cofactor.

The protein localises to the cytoplasm. It carries out the reaction N(6)-carboxybiotinyl-L-lysyl-[protein] + acetyl-CoA = N(6)-biotinyl-L-lysyl-[protein] + malonyl-CoA. It participates in lipid metabolism; malonyl-CoA biosynthesis; malonyl-CoA from acetyl-CoA: step 1/1. Its function is as follows. Component of the acetyl coenzyme A carboxylase (ACC) complex. Biotin carboxylase (BC) catalyzes the carboxylation of biotin on its carrier protein (BCCP) and then the CO(2) group is transferred by the transcarboxylase to acetyl-CoA to form malonyl-CoA. The sequence is that of Acetyl-coenzyme A carboxylase carboxyl transferase subunit beta from Acinetobacter baylyi (strain ATCC 33305 / BD413 / ADP1).